A 461-amino-acid polypeptide reads, in one-letter code: Thyroid hormone receptor beta (461 aa).

A disordered region spans residues Met-1–Gly-24. The tract at residues Met-1–Leu-106 is modulating. The span at Ala-13–Gly-24 shows a compositional bias: basic and acidic residues. Positions 107, 110, 124, 127, 145, 151, 161, and 164 each coordinate Zn(2+). 2 consecutive NR C4-type zinc fingers follow at residues Cys-107 to Cys-127 and Cys-145 to Cys-169. Positions Cys-107 to Asp-181 form a DNA-binding region, nuclear receptor. The NR LBD domain maps to Glu-217–Asp-461. An interaction with NR2F6 region spans residues Lys-244–Asp-461. 3,3',5-triiodo-L-thyronine is bound by residues Arg-282, Asn-331, and His-435. Arg-282, Asn-331, and His-435 together coordinate L-thyroxine.

The protein belongs to the nuclear hormone receptor family. NR1 subfamily. Binds DNA as a dimer; homodimer and heterodimer with RXRA. Interacts with the coactivators NCOA1/SRC1, NCOA2/GRIP1, NCOA7 and MED1/TRAP220 in a ligand-inducible manner. Interacts with the corepressor NCOR1 in absence of ligand. Interacts with C1D. Interacts with NR2F6; the interaction impairs the binding of the THRB homodimer and THRB:RXRB heterodimer to T3 response elements. Interacts with PRMT2 and THRSP. Interacts with TACC1; this interaction is decreased in the presence of thyroid hormone T3.

It is found in the nucleus. In terms of biological role, nuclear hormone receptor that can act as a repressor or activator of transcription. High affinity receptor for thyroid hormones, including triiodothyronine and thyroxine. This is Thyroid hormone receptor beta (Thrb) from Rattus norvegicus (Rat).